The primary structure comprises 874 residues: Alanine--tRNA ligase (874 aa).

Zn(2+)-binding residues include His-564, His-568, Cys-665, and His-669.

Belongs to the class-II aminoacyl-tRNA synthetase family. Zn(2+) is required as a cofactor.

The protein localises to the cytoplasm. The enzyme catalyses tRNA(Ala) + L-alanine + ATP = L-alanyl-tRNA(Ala) + AMP + diphosphate. In terms of biological role, catalyzes the attachment of alanine to tRNA(Ala) in a two-step reaction: alanine is first activated by ATP to form Ala-AMP and then transferred to the acceptor end of tRNA(Ala). Also edits incorrectly charged Ser-tRNA(Ala) and Gly-tRNA(Ala) via its editing domain. The chain is Alanine--tRNA ligase from Burkholderia multivorans (strain ATCC 17616 / 249).